Here is a 1112-residue protein sequence, read N- to C-terminus: DNA polymerase II large subunit (1112 aa).

It belongs to the archaeal DNA polymerase II family. In terms of assembly, heterodimer of a large subunit and a small subunit.

It carries out the reaction DNA(n) + a 2'-deoxyribonucleoside 5'-triphosphate = DNA(n+1) + diphosphate. It catalyses the reaction Exonucleolytic cleavage in the 3'- to 5'-direction to yield nucleoside 5'-phosphates.. Possesses two activities: a DNA synthesis (polymerase) and an exonucleolytic activity that degrades single-stranded DNA in the 3'- to 5'-direction. Has a template-primer preference which is characteristic of a replicative DNA polymerase. This chain is DNA polymerase II large subunit, found in Cenarchaeum symbiosum (strain A).